Reading from the N-terminus, the 206-residue chain is TPR repeat-containing protein YrrB (206 aa).

TPR repeat units lie at residues 1–23 (MQEG…NKED), 24–57 (AIPY…DSSA), 59–91 (TAYY…GMEN), 93–125 (DLFY…NEND), 127–159 (EARF…DPGH), and 160–193 (ADAF…QPDH).

Monomer.

In terms of biological role, could be an interacting mediator in the complex formation among RNA sulfuration components, RNA processing components, and aminoacyl-tRNA synthetases. The sequence is that of TPR repeat-containing protein YrrB (yrrB) from Bacillus subtilis (strain 168).